Consider the following 132-residue polypeptide: Salivary protein 15 Iper-2 (132 aa).

Residues 1–18 (MKVVCIIVLFVIVAVNES) form the signal peptide. 5 N-linked (GlcNAc...) asparagine glycosylation sites follow: Asn24, Asn36, Asn62, Asn89, and Asn101. The interval 113–132 (GPNGQTCADKSQCVGHIPGC) is CD4-binding.

This sequence belongs to the salp15 family. Interacts with host CD4. Interacts with host DC-SIGN (CD209). As to quaternary structure, (Microbial infection) Interacts with Borrelia outer surface protein C (OspC). As to expression, expressed in salivary glands from feeding female ticks. Highly expressed 1 day after start of feeding, and weakly expressed at the initiation of feeding and 4 days after start of feeding.

The protein localises to the secreted. Salivary tick protein that downregulates host immune system by binding to both dendritic cells, and CD4(+) T cells. Specifically binds to the CD4 coreceptor on T cells. This interaction prevents the activation of the Src kinase, Lck, and its downstream substrate Zap-70, and results in deficient activation of PLCgamma1, the repression of calcium fluxes triggered by T-cell antigen receptor (TCR) ligation, and a subsequent reduction in interleukin-2 production. This salivary protein also binds to DC-SIGN (CD209) on dendritic cells (DC) and activates the Raf-1 kinase/MEK signaling pathway that results in down-regulating expression of pro-inflammatory cytokines. Furthermore, it inhibits T cell proliferation induced by DCs. It also inhibits in vitro keratinocyte inflammation induced by Borrelia burgdorferi or by the major outer surface protein (OspC) of Borrelia. In addition, it downregulates chemokines and monocyte chemoattractant protein 1, as well as several antimicrobial peptides such as defensins, cathelicidin, psoriasin, and RNase 7. Apart from its immunomodulatory activities, it is also associated with protection of Borrelia spirochetes from antibody-mediated killing through its binding to OspC. In vivo, tests on different immune disease animal models show promising therapeutic results, e.g., in inhibiting HIV infection, experimental autoimmune encephalomyelitis, transplantation rejection, and asthma. In terms of biological role, (Microbial infection) Protects Borrelia garinii from anti-Borrelia antibody-mediated cytotoxicity in vitro. May facilitate B.garinii transmission in mouse model. Its function is as follows. (Microbial infection) Protects Borrelia burgdorferi from anti-Borrelia antibody-mediated cytotoxicity in vitro. Functionally, (Microbial infection) Protects Borrelia afzelii from anti-Borrelia antibody-mediated cytotoxicity in vitro. The sequence is that of Salivary protein 15 Iper-2 from Ixodes persulcatus (Taiga tick).